A 426-amino-acid chain; its full sequence is Testicular acid phosphatase (426 aa).

The signal sequence occupies residues 1 to 26 (MAGLGFWGHPAGPLLLLLLLVLPPRA). At 27 to 393 (LPEGPLVFVA…AAIPPAPVVP (367 aa)) the chain is on the extracellular side. H41 (nucleophile) is an active-site residue. 3 disulfide bridges follow: C159-C378, C214-C312, and C353-C357. N-linked (GlcNAc...) asparagine glycosylation is found at N191 and N269. The active-site Proton donor is the D289. 2 N-linked (GlcNAc...) asparagine glycosylation sites follow: N330 and N339. A helical membrane pass occupies residues 394–414 (LLAGAVAVLVALSLGLGLLAW). Topologically, residues 415-426 (RPGCLRALGGPV) are cytoplasmic.

It belongs to the histidine acid phosphatase family. In terms of assembly, homodimer. In terms of processing, glycosylated. As to expression, expressed mainly in the testis. Also expressed in the brain where they are enriched at the postsynaptic sites. Expressed at lower levels in the trachea, prostate, bone marrow, spinal cord, colon, fetal brain, heart, thymus, fetal liver, spleen, leukocytes, ovary, small intestine, pancreas and skeletal muscle. Expression is significantly lower in testicular cancer tissues than in normal testicular tissues. Isoform 3 is expressed in the testis, trachea, prostate and bone marrow.

The protein localises to the membrane. It catalyses the reaction a phosphate monoester + H2O = an alcohol + phosphate. Functionally, may dephosphorylate receptor tyrosine-protein kinase ERBB4 and inhibits its ligand-induced proteolytic cleavage. May play a role in odontogenesis. The protein is Testicular acid phosphatase of Homo sapiens (Human).